Consider the following 398-residue polypeptide: Small ribosomal subunit protein mS78 (rPPR3a) (398 aa).

The transit peptide at 1 to 19 (MSSLSRVLRGTFNTCPIRR) directs the protein to the mitochondrion. 7 PPR repeats span residues 108-142 (KEGFAARIISLYGKAGMFENAQKVFEEMPNRDCKR), 143-173 (SVLSFNALLSAYRLSKKFDVVEELFNELPGK), 179-213 (DIVSYNTLIKALCEKDSLPEAVALLDEIENKGLKP), 214-248 (DIVTFNTLLLSSYLKGQFELGEEIWAKMVEKNVAI), 249-283 (DIRTYNARLLGLANEAKSKELVNLFGELKASGLKP), 284-318 (DVFSFNAMIRGSINEGKMDEAEAWYKEIVKHGYRP), and 319-353 (DKATFALLLPAMCKAGDFESAIELFKETFSKRYLV).

Belongs to the PPR family. P subfamily. In terms of assembly, component of the mitochondrial ribosome small subunit.

It localises to the mitochondrion. This is Small ribosomal subunit protein mS78 (rPPR3a) from Arabidopsis thaliana (Mouse-ear cress).